A 357-amino-acid chain; its full sequence is MSQKQFMQNPWSNWMKGEGPDSDIVISTRLRIARNLRQHPFPLLATDSQAEEVVRKVTEVSDSEAMRKRHQLQVIHMDQINPLEKRVLVEKHLISPHLAEESRKGAVLLREDESVSIMVNEEDHIRIQVLLPGFRLNEAWEIGTKIDDIFEKSLNYAFDETRGYLTSCPTNVGTGIRASVMLHLPALVMTQQISRILQAINQVGLVVRGIYGEGSEALGNLFQLSNQVTLGMSESDILSNLYGVARQIIEQERVARTYLLEHTRVSLEDRIFRSYGILMYARTVESKEAAQRLSDVRLGIDLGIIPNVSPLVLNELLVTTQPGFLQHHAGQKLTPDQRDERRARLIRERLRVVESQE.

Residues 24 to 255 (IVISTRLRIA…RQIIEQERVA (232 aa)) enclose the Phosphagen kinase C-terminal domain. Residues 27 to 31 (STRLR), His92, Arg126, 177 to 181 (RASVM), and 208 to 213 (RGIYGE) each bind ATP. Residues 338-343 (RDERRA) carry the RDXXRA motif of the pArg binding pocket involved in allosteric regulation motif.

The protein belongs to the ATP:guanido phosphotransferase family.

It carries out the reaction L-arginyl-[protein] + ATP = N(omega)-phospho-L-arginyl-[protein] + ADP + H(+). Its activity is regulated as follows. Appears to be allosterically activated by the binding of pArg-containing polypeptides to the pArg-binding pocket localized in the C-terminal domain of McsB. Its function is as follows. Catalyzes the specific phosphorylation of arginine residues in proteins. The protein is Protein-arginine kinase of Brevibacillus brevis (strain 47 / JCM 6285 / NBRC 100599).